Consider the following 349-residue polypeptide: tRNA pseudouridine synthase D (349 aa).

Phenylalanine 27 provides a ligand contact to substrate. The Nucleophile role is filled by aspartate 80. Asparagine 129 serves as a coordination point for substrate. In terms of domain architecture, TRUD spans 155–303 (GVPNYFGAQR…VEAARRAMLL (149 aa)). Position 329 (phenylalanine 329) interacts with substrate.

This sequence belongs to the pseudouridine synthase TruD family.

The enzyme catalyses uridine(13) in tRNA = pseudouridine(13) in tRNA. Its function is as follows. Responsible for synthesis of pseudouridine from uracil-13 in transfer RNAs. The polypeptide is tRNA pseudouridine synthase D (Escherichia coli (strain SMS-3-5 / SECEC)).